The following is a 573-amino-acid chain: Arylsulfatase I (573 aa).

Residues 1–23 (MHALTGLSLVSLLSFGYLSWDWA) form the signal peptide. Residues aspartate 56, aspartate 57, and cysteine 94 each coordinate Ca(2+). Residue cysteine 94 is the Nucleophile of the active site. Cysteine 94 carries the post-translational modification 3-oxoalanine (Cys). Lysine 148 serves as a coordination point for substrate. Histidine 150 is a catalytic residue. Histidine 240 provides a ligand contact to substrate. Asparagine 277 and asparagine 289 each carry an N-linked (GlcNAc...) asparagine glycan. Positions 298 and 299 each coordinate Ca(2+). Lysine 316 contacts substrate. Residues asparagine 467 and asparagine 497 are each glycosylated (N-linked (GlcNAc...) asparagine). Residues 516–550 (FNGGAWGPWASDEEEEEEEEEAGRARSFSRGRRKK) form a disordered region. Positions 526–536 (SDEEEEEEEEE) are enriched in acidic residues.

It belongs to the sulfatase family. Requires Ca(2+) as cofactor. Post-translationally, the oxidation of Cys-94 residue to 3-oxoalanine (also known as C(alpha)-formylglycine) by SUMF1/Sulfatase-modifying factor 1, seems critical for catalytic activity.

The protein localises to the secreted. It localises to the endoplasmic reticulum. Displays arylsulfatase activity at neutral pH, when co-expressed with SUMF1; arylsulfatase activity is measured in the secretion medium of retinal cell line, but no activity is recorded when measured in cell extracts. The polypeptide is Arylsulfatase I (ARSI) (Canis lupus familiaris (Dog)).